The following is a 308-amino-acid chain: Aspartate carbamoyltransferase catalytic subunit (308 aa).

Carbamoyl phosphate contacts are provided by Arg-55 and Thr-56. Lys-83 contributes to the L-aspartate binding site. Carbamoyl phosphate contacts are provided by Arg-105, His-133, and Gln-136. 2 residues coordinate L-aspartate: Arg-166 and Arg-223. Positions 264 and 265 each coordinate carbamoyl phosphate.

The protein belongs to the aspartate/ornithine carbamoyltransferase superfamily. ATCase family. Heterododecamer (2C3:3R2) of six catalytic PyrB chains organized as two trimers (C3), and six regulatory PyrI chains organized as three dimers (R2).

The catalysed reaction is carbamoyl phosphate + L-aspartate = N-carbamoyl-L-aspartate + phosphate + H(+). The protein operates within pyrimidine metabolism; UMP biosynthesis via de novo pathway; (S)-dihydroorotate from bicarbonate: step 2/3. In terms of biological role, catalyzes the condensation of carbamoyl phosphate and aspartate to form carbamoyl aspartate and inorganic phosphate, the committed step in the de novo pyrimidine nucleotide biosynthesis pathway. The polypeptide is Aspartate carbamoyltransferase catalytic subunit (Salinispora arenicola (strain CNS-205)).